The following is a 279-amino-acid chain: NAD-dependent protein deacylase (279 aa).

Residues 20–272 enclose the Deacetylase sirtuin-type domain; sequence RERLRQRIFF…PEFVEKLLKG (253 aa). An NAD(+)-binding site is contributed by 48-67; it reads GAGISAESGIRTFRAADGLW. Y92 and R95 together coordinate substrate. Residue 129–132 coordinates NAD(+); that stretch reads QNID. H147 (proton acceptor) is an active-site residue. Residues C155 and C174 each coordinate Zn(2+). Residues 214 to 216, 240 to 242, and A258 contribute to the NAD(+) site; these read GTS and NLE.

It belongs to the sirtuin family. Class III subfamily. In terms of assembly, forms a 1:1 complex with acetyl-CoA synthetase (Acs). It depends on Zn(2+) as a cofactor.

It is found in the cytoplasm. The catalysed reaction is N(6)-acetyl-L-lysyl-[protein] + NAD(+) + H2O = 2''-O-acetyl-ADP-D-ribose + nicotinamide + L-lysyl-[protein]. It catalyses the reaction N(6)-succinyl-L-lysyl-[protein] + NAD(+) + H2O = 2''-O-succinyl-ADP-D-ribose + nicotinamide + L-lysyl-[protein]. The enzyme catalyses N(6)-(2-hydroxyisobutanoyl)-L-lysyl-[protein] + NAD(+) + H2O = 2''-O-(2-hydroxyisobutanoyl)-ADP-D-ribose + nicotinamide + L-lysyl-[protein]. Deacetylation is inhibited by nicotinamide. Functionally, NAD-dependent lysine deacetylase that specifically removes acetyl groups on target proteins. Also acts as a protein-lysine deacylase by mediating protein desuccinylation and de-2-hydroxyisobutyrylation. Modulates the activities of several proteins which are inactive in their acylated form. Activates the enzyme acetyl-CoA synthetase (acs) by deacetylating 'Lys-609' in the inactive, acetylated form of the enzyme. May also modulate the activity of other propionyl-adenosine monophosphate (AMP)-forming enzymes. The sequence is that of NAD-dependent protein deacylase from Escherichia coli (strain K12).